Reading from the N-terminus, the 220-residue chain is Germin-like protein subfamily 2 member 4 (220 aa).

Residues methionine 1–alanine 21 form the signal peptide. Cysteines 31 and 46 form a disulfide. Residues asparagine 51 and asparagine 69 are each glycosylated (N-linked (GlcNAc...) asparagine). A Cupin type-1 domain is found at phenylalanine 58 to glutamate 209. Mn(2+) is bound by residues histidine 108, histidine 110, glutamate 115, and histidine 154.

It belongs to the germin family. As to quaternary structure, oligomer (believed to be a pentamer but probably hexamer).

Its subcellular location is the secreted. The protein resides in the extracellular space. It is found in the apoplast. Functionally, may play a role in plant defense. Probably has no oxalate oxidase activity even if the active site is conserved. The chain is Germin-like protein subfamily 2 member 4 (GLP10) from Arabidopsis thaliana (Mouse-ear cress).